The chain runs to 471 residues: Protoporphyrinogen oxidase (471 aa).

FAD-binding positions include 16-21 (GGGISG), 39-40 (ES), alanine 47, 61-64 (GPNS), valine 251, tryptophan 408, and 446-448 (VGL).

Belongs to the protoporphyrinogen/coproporphyrinogen oxidase family. Protoporphyrinogen oxidase subfamily. In terms of assembly, monomer. Homodimer. The cofactor is FAD.

It is found in the cytoplasm. The protein resides in the cell membrane. The catalysed reaction is protoporphyrinogen IX + 3 O2 = protoporphyrin IX + 3 H2O2. It functions in the pathway porphyrin-containing compound metabolism; protoporphyrin-IX biosynthesis; protoporphyrin-IX from protoporphyrinogen-IX: step 1/1. With respect to regulation, strongly inhibited by acifluorfen. Catalyzes the 6-electron oxidation of protoporphyrinogen-IX to form protoporphyrin-IX. Does not oxidize coproporphyrinogen III. Involved in the classical protoporphyrin-dependent (PPD) heme b biosynthesis. The chain is Protoporphyrinogen oxidase from Myxococcus xanthus.